A 616-amino-acid polypeptide reads, in one-letter code: Dihydroxy-acid dehydratase (616 aa).

Asp81 is a binding site for Mg(2+). Cys122 serves as a coordination point for [2Fe-2S] cluster. Asp123 and Lys124 together coordinate Mg(2+). N6-carboxylysine is present on Lys124. Cys195 serves as a coordination point for [2Fe-2S] cluster. Glu491 contacts Mg(2+). Catalysis depends on Ser517, which acts as the Proton acceptor.

This sequence belongs to the IlvD/Edd family. As to quaternary structure, homodimer. Requires [2Fe-2S] cluster as cofactor. Mg(2+) is required as a cofactor.

It carries out the reaction (2R)-2,3-dihydroxy-3-methylbutanoate = 3-methyl-2-oxobutanoate + H2O. It catalyses the reaction (2R,3R)-2,3-dihydroxy-3-methylpentanoate = (S)-3-methyl-2-oxopentanoate + H2O. Its pathway is amino-acid biosynthesis; L-isoleucine biosynthesis; L-isoleucine from 2-oxobutanoate: step 3/4. It functions in the pathway amino-acid biosynthesis; L-valine biosynthesis; L-valine from pyruvate: step 3/4. Functions in the biosynthesis of branched-chain amino acids. Catalyzes the dehydration of (2R,3R)-2,3-dihydroxy-3-methylpentanoate (2,3-dihydroxy-3-methylvalerate) into 2-oxo-3-methylpentanoate (2-oxo-3-methylvalerate) and of (2R)-2,3-dihydroxy-3-methylbutanoate (2,3-dihydroxyisovalerate) into 2-oxo-3-methylbutanoate (2-oxoisovalerate), the penultimate precursor to L-isoleucine and L-valine, respectively. This chain is Dihydroxy-acid dehydratase, found in Shewanella loihica (strain ATCC BAA-1088 / PV-4).